Here is a 199-residue protein sequence, read N- to C-terminus: NADH-quinone oxidoreductase subunit C (199 aa).

Belongs to the complex I 30 kDa subunit family. NDH-1 is composed of 14 different subunits. Subunits NuoB, C, D, E, F, and G constitute the peripheral sector of the complex.

The protein localises to the cell inner membrane. The catalysed reaction is a quinone + NADH + 5 H(+)(in) = a quinol + NAD(+) + 4 H(+)(out). Its function is as follows. NDH-1 shuttles electrons from NADH, via FMN and iron-sulfur (Fe-S) centers, to quinones in the respiratory chain. The immediate electron acceptor for the enzyme in this species is believed to be ubiquinone. Couples the redox reaction to proton translocation (for every two electrons transferred, four hydrogen ions are translocated across the cytoplasmic membrane), and thus conserves the redox energy in a proton gradient. The polypeptide is NADH-quinone oxidoreductase subunit C (Roseobacter denitrificans (strain ATCC 33942 / OCh 114) (Erythrobacter sp. (strain OCh 114))).